The sequence spans 151 residues: Large ribosomal subunit protein eL8 (151 aa).

The protein belongs to the eukaryotic ribosomal protein eL8 family. Part of the 50S ribosomal subunit. Probably part of the RNase P complex.

Its subcellular location is the cytoplasm. Multifunctional RNA-binding protein that recognizes the K-turn motif in ribosomal RNA, the RNA component of RNase P, box H/ACA, box C/D and box C'/D' sRNAs. The polypeptide is Large ribosomal subunit protein eL8 (Pyrobaculum neutrophilum (strain DSM 2338 / JCM 9278 / NBRC 100436 / V24Sta) (Thermoproteus neutrophilus)).